Here is a 227-residue protein sequence, read N- to C-terminus: Pyridoxine-5'-phosphate oxidase (227 aa).

20-23 (RKDY) contacts pyridoxal 5'-phosphate. 75–78 (RVVL) contacts FMN. Lys-80 contacts pyridoxal 5'-phosphate. FMN-binding positions include 90–91 (YT), 96–97 (RK), and Gln-117. Residues Tyr-135, Arg-139, and Ser-143 each contribute to the pyridoxal 5'-phosphate site. Residues 152–153 (FQ) and Trp-197 contribute to the FMN site. 203 to 205 (RIH) contributes to the pyridoxal 5'-phosphate binding site. FMN is bound at residue Arg-207.

It belongs to the pyridoxamine 5'-phosphate oxidase family. As to quaternary structure, homodimer. FMN serves as cofactor.

The enzyme catalyses pyridoxamine 5'-phosphate + O2 + H2O = pyridoxal 5'-phosphate + H2O2 + NH4(+). It catalyses the reaction pyridoxine 5'-phosphate + O2 = pyridoxal 5'-phosphate + H2O2. It participates in cofactor metabolism; pyridoxal 5'-phosphate salvage; pyridoxal 5'-phosphate from pyridoxamine 5'-phosphate: step 1/1. Its pathway is cofactor metabolism; pyridoxal 5'-phosphate salvage; pyridoxal 5'-phosphate from pyridoxine 5'-phosphate: step 1/1. Functionally, catalyzes the oxidation of either pyridoxine 5'-phosphate (PNP) or pyridoxamine 5'-phosphate (PMP) into pyridoxal 5'-phosphate (PLP). The sequence is that of Pyridoxine-5'-phosphate oxidase (pnpo) from Dictyostelium discoideum (Social amoeba).